A 149-amino-acid chain; its full sequence is IQ domain-containing protein F5 (149 aa).

IQ domains are found at residues 12–41 and 68–97; these read ENKA…RAWI and QEWA…AVRI.

In Bos taurus (Bovine), this protein is IQ domain-containing protein F5 (IQCF5).